A 152-amino-acid chain; its full sequence is Transcriptional repressor NrdR (152 aa).

A zinc finger lies at 3–34; sequence CPFCNHGELKVIDSRNAPEANAIKRRRECLKC. The ATP-cone domain occupies 48–138; the sequence is LQVLKRDGRY…VYRRFKDVGE (91 aa).

Belongs to the NrdR family. The cofactor is Zn(2+).

Functionally, negatively regulates transcription of bacterial ribonucleotide reductase nrd genes and operons by binding to NrdR-boxes. This Chlamydia pneumoniae (Chlamydophila pneumoniae) protein is Transcriptional repressor NrdR.